Reading from the N-terminus, the 344-residue chain is Dihydroorotase (344 aa).

Zn(2+)-binding residues include His-13 and His-15. Residues 15-17 and Asn-41 contribute to the substrate site; that span reads HLR. Zn(2+)-binding residues include Lys-99, His-136, and His-174. The residue at position 99 (Lys-99) is an N6-carboxylysine. His-136 serves as a coordination point for substrate. Leu-219 serves as a coordination point for substrate. Asp-247 contacts Zn(2+). The active site involves Asp-247. Substrate-binding residues include His-251 and Ala-263.

It belongs to the metallo-dependent hydrolases superfamily. DHOase family. Class II DHOase subfamily. Homodimer. The cofactor is Zn(2+).

It catalyses the reaction (S)-dihydroorotate + H2O = N-carbamoyl-L-aspartate + H(+). The protein operates within pyrimidine metabolism; UMP biosynthesis via de novo pathway; (S)-dihydroorotate from bicarbonate: step 3/3. Functionally, catalyzes the reversible cyclization of carbamoyl aspartate to dihydroorotate. This chain is Dihydroorotase, found in Acinetobacter baylyi (strain ATCC 33305 / BD413 / ADP1).